The chain runs to 184 residues: Putative pre-16S rRNA nuclease (184 aa).

Residues 1–23 (MFSSQHRLLYQPSGPDLSKNLDP) are disordered.

Belongs to the YqgF nuclease family.

It localises to the cytoplasm. In terms of biological role, could be a nuclease involved in processing of the 5'-end of pre-16S rRNA. The sequence is that of Putative pre-16S rRNA nuclease from Mycobacterium leprae (strain Br4923).